The primary structure comprises 105 residues: Mini zinc finger protein 2 (105 aa).

The interval 1–29 is disordered; that stretch reads MGPQQDRSAAKPYANGSTAAAAAAGRKEN. The segment at 35–84 adopts a ZF-HD dimerization-type; degenerate zinc-finger fold; the sequence is YRECQRNHAASIGGHAVDGCREFMASGADGTAAALLCAACGCHQSFHRRE.

Homo- and heterodimers.

It localises to the cytoplasm. Its function is as follows. Inhibits zinc finger homeodomain (ZHD) transcription factors, by interacting with them to prevent both their nuclear localization and their DNA-binding properties. This Oryza sativa subsp. indica (Rice) protein is Mini zinc finger protein 2 (MIF2).